Reading from the N-terminus, the 407-residue chain is Substance-P receptor (407 aa).

Residues 1–31 lie on the Extracellular side of the membrane; it reads MDNVLPGDSDLFPNISTNSSESNQFVQPAWQ. N-linked (GlcNAc...) asparagine glycans are attached at residues asparagine 14 and asparagine 18. Residues 32–54 traverse the membrane as a helical segment; that stretch reads IVLWAAAYTVIVVTSVVGNVVVM. Over 55 to 64 the chain is Cytoplasmic; sequence WIILAHKRMR. A helical transmembrane segment spans residues 65-86; it reads TVTNYFLVNLAFAEASMAAFNT. The Extracellular portion of the chain corresponds to 87–106; that stretch reads VVNFTYAVHNEWYYGLFYCK. N-linked (GlcNAc...) asparagine glycosylation is present at asparagine 89. The cysteines at positions 105 and 180 are disulfide-linked. The chain crosses the membrane as a helical span at residues 107 to 128; sequence FHNFFPIAAVFASIYSMTAVAF. Over 129 to 148 the chain is Cytoplasmic; that stretch reads DRYMAIIHPLQPRLSATATK. Residues 149–169 form a helical membrane-spanning segment; the sequence is VVIFVIWVLALLLAFPQGYYS. Over 170-194 the chain is Extracellular; that stretch reads TTETMPGRVVCMIEWPEHPNRTYEK. Asparagine 189 carries N-linked (GlcNAc...) asparagine glycosylation. A helical membrane pass occupies residues 195 to 219; sequence AYHICVTVLIYFLPLLVIGYAYTVV. Topologically, residues 220 to 248 are cytoplasmic; that stretch reads GITLWASEIPGDSSDRYHEQVSAKRKVVK. A helical membrane pass occupies residues 249–270; the sequence is MMIVVVCTFAICWLPFHVFFLL. The Extracellular portion of the chain corresponds to 271–283; it reads PYINPDLYVKKFI. A helical membrane pass occupies residues 284-308; sequence QQVYLAIMWLAMSSTMYNPIIYCCL. Residues 309–407 are Cytoplasmic-facing; sequence NDRFRLGFKH…SSSFYSNMLA (99 aa). Cysteine 322 is lipidated: S-palmitoyl cysteine. The interval 365 to 407 is disordered; sequence HEDEAEEGPKATPSSLDLTSNGSSRSNSKTMTESSSFYSNMLA. Residues 376 to 407 show a composition bias toward polar residues; it reads TPSSLDLTSNGSSRSNSKTMTESSSFYSNMLA.

This sequence belongs to the G-protein coupled receptor 1 family. As to quaternary structure, interacts with ARRB1.

Its subcellular location is the cell membrane. Its function is as follows. This is a receptor for the tachykinin neuropeptide substance P. It is probably associated with G proteins that activate a phosphatidylinositol-calcium second messenger system. The chain is Substance-P receptor (TACR1) from Meriones unguiculatus (Mongolian jird).